Here is a 109-residue protein sequence, read N- to C-terminus: Iron-sulfur cluster assembly protein CyaY (109 aa).

It belongs to the frataxin family.

Functionally, involved in iron-sulfur (Fe-S) cluster assembly. May act as a regulator of Fe-S biogenesis. This chain is Iron-sulfur cluster assembly protein CyaY, found in Bordetella avium (strain 197N).